Consider the following 268-residue polypeptide: Lipopolysaccharide core heptose(I) kinase WaaP (268 aa).

Phosphotyrosine; by autocatalysis occurs at positions 30, 48, and 98. The active site involves Asp163. Residues Tyr165, Tyr211, Tyr231, Tyr258, and Tyr264 each carry the phosphotyrosine; by autocatalysis modification.

It belongs to the protein kinase superfamily. KdkA/RfaP family. As to quaternary structure, interacts with acyl-AcpP. The WaaP hydrophobic channel can accommodate acyl chains of different lengths, but myristyl-ACP is likely its physiological binding partner. Requires Mg(2+) as cofactor.

It localises to the cytoplasm. It carries out the reaction an L-alpha-D-Hep-(1-&gt;3)-L-alpha-D-Hep-(1-&gt;5)-[alpha-Kdo-(2-&gt;4)]-alpha-Kdo-(2-&gt;6)-lipid A + ATP = an L-alpha-D-Hep-(1-&gt;3)-4-O-phospho-L-alpha-D-Hep-(1-&gt;5)-[alpha-Kdo-(2-&gt;4)]-alpha-Kdo-(2-&gt;6)-lipid A + ADP + H(+). The catalysed reaction is L-tyrosyl-[protein] + ATP = O-phospho-L-tyrosyl-[protein] + ADP + H(+). It participates in bacterial outer membrane biogenesis; LPS core biosynthesis. With respect to regulation, acylated-acyl carrier protein (acyl-ACP) acts as a very tightly bound cofactor necessary for the production and stability of active WaaP kinase. In terms of biological role, kinase involved in the biosynthesis of the core oligosaccharide region of lipopolysaccharide (LPS). Catalyzes the phosphorylation of heptose I (HepI), the first heptose added to the Kdo2-lipid A module. Also has protein-tyrosine kinase activity: autophosphorylates on all Tyr residues; in vitro can phosphorylate poly(Glu,Tyr). The protein is Lipopolysaccharide core heptose(I) kinase WaaP of Pseudomonas aeruginosa (strain ATCC 15692 / DSM 22644 / CIP 104116 / JCM 14847 / LMG 12228 / 1C / PRS 101 / PAO1).